Reading from the N-terminus, the 355-residue chain is Fe-S cluster assembly protein DRE2 (355 aa).

Positions 23–156 are N-terminal SAM-like domain; that stretch reads TSFNPRTLLL…KPDYSASVAV (134 aa). The tract at residues 157–247 is linker; that stretch reads PLRLRRKDNS…EDTLLTEEDM (91 aa). Residues 189–214 form a disordered region; it reads RKSVDMTDDVPEKDVPKVDSPKNDAP. The segment covering 190-213 has biased composition (basic and acidic residues); it reads KSVDMTDDVPEKDVPKVDSPKNDA. Residues Cys-257, Cys-268, Cys-271, and Cys-273 each contribute to the [2Fe-2S] cluster site. The tract at residues 257–273 is fe-S binding site A; sequence CAPRAGKRRRACKDCTC. [4Fe-4S] cluster contacts are provided by Cys-318, Cys-321, Cys-329, and Cys-332. Short sequence motifs (cx2C motif) lie at residues 318–321 and 329–332; these read CGNC and CDGC. Residues 318-332 form a fe-S binding site B region; the sequence is CGNCSLGDAFRCDGC.

The protein belongs to the anamorsin family. Monomer. Interacts with TAH18. Interacts with MIA40. Requires [2Fe-2S] cluster as cofactor. The cofactor is [4Fe-4S] cluster.

Its subcellular location is the cytoplasm. The protein localises to the mitochondrion intermembrane space. In terms of biological role, component of the cytosolic iron-sulfur (Fe-S) protein assembly (CIA) machinery required for the maturation of extramitochondrial Fe-S proteins. Part of an electron transfer chain functioning in an early step of cytosolic Fe-S biogenesis, facilitating the de novo assembly of a [4Fe-4S] cluster on the scaffold complex CFD1-NBP35. Electrons are transferred to DRE2 from NADPH via the FAD- and FMN-containing protein TAH18. TAH18-DRE2 are also required for the assembly of the diferric tyrosyl radical cofactor of ribonucleotide reductase (RNR), probably by providing electrons for reduction during radical cofactor maturation in the catalytic small subunit RNR2. The protein is Fe-S cluster assembly protein DRE2 of Botryotinia fuckeliana (strain B05.10) (Noble rot fungus).